The primary structure comprises 106 residues: Envelope small membrane protein (106 aa).

Residues 1 to 11 are Virion surface-facing; that stretch reads MMNLLNTSLEE. Residues 12–32 traverse the membrane as a helical segment; sequence NGSFLTALYVICEFVALYLLG. The Intravirion portion of the chain corresponds to 33-106; sequence RALQAFVQAA…ANFQNGKLHT (74 aa).

It belongs to the gammacoronaviruses E protein family. Homooligomer. Interacts with the M membrane protein in the budding compartment of the host cell, which is located between endoplasmic reticulum and the Golgi complex. The cytoplasmic tails of both proteins are important for this function. Interacts with Nucleoprotein.

It is found in the host Golgi apparatus membrane. Plays a central role in virus morphogenesis and assembly. Acts as a viroporin and self-assembles in host membranes forming pentameric protein-lipid pores that allow ion transport. Also plays a role in the induction of apoptosis. This Gallus gallus (Chicken) protein is Envelope small membrane protein.